A 147-amino-acid polypeptide reads, in one-letter code: UPF0306 protein YhbP (147 aa).

Belongs to the UPF0306 family.

The protein is UPF0306 protein YhbP of Escherichia coli O1:K1 / APEC.